The primary structure comprises 421 residues: MVPSVMEGAPQLGITSTDTSSAGVPPGLKLIPTDRLDRRTDEEIAAWLQTRHPVTSDKNVWAFWHNGYTNMPPWVQRNIINWVRRLGPDWTVHLLDRVDGSATNVSHYVDSSFFPECFNNNTMDGPTVGQHSGDLVRLPLLWLYGGIWIDAGSFLFRHVEDICWNKIEDPESPYEMAGFVIEMRPGVEVMLNGFIAAKRGNPFIKRWLEIFKKLWDGATNVQGFHKHPLLRHLPMLCPPIDKLNLPPQGLNVVMEQFTDYMSQIMSFERLRKLVDPSDGFNGPEYYSNKMLLCSALQETFYFQLVTEWSGTKQFNLLSTKRKGEGVVKDENWHAAENFVHDALANTATMKLSHGPPGALDSFLADLWDSEEHHGKDNEDGTFAAYLRYGSVHFDQTREMVPIKMGWPDEEVLEAGVLEPKK.

The tract at residues 1–26 (MVPSVMEGAPQLGITSTDTSSAGVPP) is disordered. The span at 13–22 (GITSTDTSSA) shows a compositional bias: polar residues.

This sequence belongs to the afumC glycosyltransferase family.

It functions in the pathway secondary metabolite biosynthesis. Functionally, O-glycosyltransferase; part of the gene cluster that mediates the biosynthesis of the brasilane terpene glycosides brasilane D and E. The biosynthesis starts with the activity of the terpene cyclase braA that converts farnesyl pyrophosphate into the sesquiterpene alcohol trichobrasilenol. Subsequently, trichobrasilenol is glycosylated by the O-glycosyltransferase braB putatively using UDP-GlcNAc as sugar donor to yield brasilane A. The latter then undergoes two rounds of oxidation performed by the cytochrome P450 monooxygenase braC. In the first round braC hydroxylates C-12 forming brasilane D, which serves as substrate in the second round to establish the epoxide at the bond between C-5 and C-10 and oxidize the alcohol at C-12 to an aldehyde leading to the final product brasilane E. BraB is also able to glycosylate geraniol, linalool, perillyl alcohol, 3,4-dichlorophenol and, to a lesser extend, benzyl alcohol. In Annulohypoxylon truncatum (Hypoxylon truncatum), this protein is O-glycosyltransferase braB.